Here is a 286-residue protein sequence, read N- to C-terminus: Expansin-B4 (286 aa).

The N-terminal stretch at M1 to A24 is a signal peptide. Residues N28 and N44 are each glycosylated (N-linked (GlcNAc...) asparagine). An Expansin-like EG45 domain is found at G75–L181. Cystine bridges form between C78/C106, C109/C176, and C114/C120. Residues V194–S281 form the Expansin-like CBD domain. N257 carries an N-linked (GlcNAc...) asparagine glycan.

The protein belongs to the expansin family. Expansin B subfamily. As to expression, expressed in internodes.

The protein localises to the secreted. It localises to the cell wall. Its subcellular location is the membrane. Its function is as follows. May cause loosening and extension of plant cell walls by disrupting non-covalent bonding between cellulose microfibrils and matrix glucans. No enzymatic activity has been found. May be required for rapid internodal elongation in deepwater rice during submergence. The chain is Expansin-B4 (EXPB4) from Oryza sativa subsp. japonica (Rice).